We begin with the raw amino-acid sequence, 278 residues long: MKKRKQYCGYIAIVGKPNVGKSTLINEIIENEISITSKKKNTTQKNILGIKTKQLHQFIYVDTPGIYLNNEKDDSFKIIKSSILILFIVDRTVWKTDDEIVLNKIKKNKIPIICVINKIDKILDKSIILPHINFLLKKINPIEIIPISAKKRENIVLLENLIYPYLPNNNHIFPKKYITTHSLSFSISEIIRQKLIFFLRDELPSIITVKIESIEEKFKKKLYIRAAIYVKHERQKKIIIGKKAEGIKKISIASRLDIEKKINMKIYLIIWVKVKIKK.

The 162-residue stretch at Tyr-7–Asn-168 folds into the Era-type G domain. The G1 stretch occupies residues Gly-15–Ser-22. Gly-15–Ser-22 provides a ligand contact to GTP. Residues Asn-41–Lys-45 are G2. Residues Asp-62–Gly-65 are G3. GTP contacts are provided by residues Asp-62 to Ile-66 and Asn-117 to Asp-120. The tract at residues Asn-117–Asp-120 is G4. The interval Ile-147–Ala-149 is G5. A KH type-2 domain is found at Leu-199–Ile-276.

The protein belongs to the TRAFAC class TrmE-Era-EngA-EngB-Septin-like GTPase superfamily. Era GTPase family. In terms of assembly, monomer.

The protein localises to the cytoplasm. It localises to the cell membrane. Functionally, an essential GTPase that binds both GDP and GTP, with rapid nucleotide exchange. Plays a role in 16S rRNA processing and 30S ribosomal subunit biogenesis and possibly also in cell cycle regulation and energy metabolism. In Buchnera aphidicola subsp. Schizaphis graminum (strain Sg), this protein is GTPase Era.